The following is a 334-amino-acid chain: Holliday junction branch migration complex subunit RuvB (334 aa).

Positions 1-182 (MNERMVDQSM…FGVHLRLEYY (182 aa)) are large ATPase domain (RuvB-L). ATP is bound by residues L21, R22, G63, K66, T67, T68, 129-131 (EDF), R172, Y182, and R219. T67 provides a ligand contact to Mg(2+). The tract at residues 183-253 (NESDLKEIII…TTKHALGLLQ (71 aa)) is small ATPAse domain (RuvB-S). The tract at residues 256–334 (QHGLDYIDHK…HFAKSNEERG (79 aa)) is head domain (RuvB-H). R292, R311, and R316 together coordinate DNA.

This sequence belongs to the RuvB family. As to quaternary structure, homohexamer. Forms an RuvA(8)-RuvB(12)-Holliday junction (HJ) complex. HJ DNA is sandwiched between 2 RuvA tetramers; dsDNA enters through RuvA and exits via RuvB. An RuvB hexamer assembles on each DNA strand where it exits the tetramer. Each RuvB hexamer is contacted by two RuvA subunits (via domain III) on 2 adjacent RuvB subunits; this complex drives branch migration. In the full resolvosome a probable DNA-RuvA(4)-RuvB(12)-RuvC(2) complex forms which resolves the HJ.

Its subcellular location is the cytoplasm. The catalysed reaction is ATP + H2O = ADP + phosphate + H(+). Its function is as follows. The RuvA-RuvB-RuvC complex processes Holliday junction (HJ) DNA during genetic recombination and DNA repair, while the RuvA-RuvB complex plays an important role in the rescue of blocked DNA replication forks via replication fork reversal (RFR). RuvA specifically binds to HJ cruciform DNA, conferring on it an open structure. The RuvB hexamer acts as an ATP-dependent pump, pulling dsDNA into and through the RuvAB complex. RuvB forms 2 homohexamers on either side of HJ DNA bound by 1 or 2 RuvA tetramers; 4 subunits per hexamer contact DNA at a time. Coordinated motions by a converter formed by DNA-disengaged RuvB subunits stimulates ATP hydrolysis and nucleotide exchange. Immobilization of the converter enables RuvB to convert the ATP-contained energy into a lever motion, pulling 2 nucleotides of DNA out of the RuvA tetramer per ATP hydrolyzed, thus driving DNA branch migration. The RuvB motors rotate together with the DNA substrate, which together with the progressing nucleotide cycle form the mechanistic basis for DNA recombination by continuous HJ branch migration. Branch migration allows RuvC to scan DNA until it finds its consensus sequence, where it cleaves and resolves cruciform DNA. This Staphylococcus aureus (strain N315) protein is Holliday junction branch migration complex subunit RuvB.